The chain runs to 255 residues: Thiazole synthase (255 aa).

Lys96 acts as the Schiff-base intermediate with DXP in catalysis. 1-deoxy-D-xylulose 5-phosphate-binding positions include Gly157, Ala183–Gly184, and Asn205–Thr206.

Belongs to the ThiG family. Homotetramer. Forms heterodimers with either ThiH or ThiS.

The protein localises to the cytoplasm. The enzyme catalyses [ThiS sulfur-carrier protein]-C-terminal-Gly-aminoethanethioate + 2-iminoacetate + 1-deoxy-D-xylulose 5-phosphate = [ThiS sulfur-carrier protein]-C-terminal Gly-Gly + 2-[(2R,5Z)-2-carboxy-4-methylthiazol-5(2H)-ylidene]ethyl phosphate + 2 H2O + H(+). It functions in the pathway cofactor biosynthesis; thiamine diphosphate biosynthesis. In terms of biological role, catalyzes the rearrangement of 1-deoxy-D-xylulose 5-phosphate (DXP) to produce the thiazole phosphate moiety of thiamine. Sulfur is provided by the thiocarboxylate moiety of the carrier protein ThiS. In vitro, sulfur can be provided by H(2)S. This is Thiazole synthase from Geobacillus sp. (strain WCH70).